Reading from the N-terminus, the 298-residue chain is Ribosomal RNA small subunit methyltransferase H (298 aa).

Residues 35–37, Asp55, Phe82, Asp100, and Gln107 each bind S-adenosyl-L-methionine; that span reads GGH.

Belongs to the methyltransferase superfamily. RsmH family.

The protein resides in the cytoplasm. The enzyme catalyses cytidine(1402) in 16S rRNA + S-adenosyl-L-methionine = N(4)-methylcytidine(1402) in 16S rRNA + S-adenosyl-L-homocysteine + H(+). Specifically methylates the N4 position of cytidine in position 1402 (C1402) of 16S rRNA. This is Ribosomal RNA small subunit methyltransferase H from Chlamydia abortus (strain DSM 27085 / S26/3) (Chlamydophila abortus).